The following is a 59-amino-acid chain: Large ribosomal subunit protein bL33 (59 aa).

Belongs to the bacterial ribosomal protein bL33 family.

The protein is Large ribosomal subunit protein bL33 of Neorickettsia sennetsu (strain ATCC VR-367 / Miyayama) (Ehrlichia sennetsu).